The chain runs to 2455 residues: Ectopic P granules protein 5 homolog (2455 aa).

Residues 1-42 (MATLEKPKKEKSKKSRNRVPIEKEEEEPAELSTSEEQRPAEN) are disordered. Position 44 is a phosphoserine (Ser44). The tract at residues 77–105 (VTSQEPEGTQEPTETEAQPSAPSAPPSTT) is disordered. Low complexity predominate over residues 80–97 (QEPEGTQEPTETEAQPSA). A Phosphoserine modification is found at Ser467.

This sequence belongs to the EPG5 family.

The protein localises to the cytoplasm. The protein resides in the perinuclear region. Its subcellular location is the lysosome. Involved in autophagy. Plays a role in late steps of autophagy. The chain is Ectopic P granules protein 5 homolog from Drosophila melanogaster (Fruit fly).